A 304-amino-acid polypeptide reads, in one-letter code: Glutaminase (304 aa).

Positions 63, 113, 157, 164, 188, 240, and 258 each coordinate substrate.

This sequence belongs to the glutaminase family. In terms of assembly, homotetramer.

It catalyses the reaction L-glutamine + H2O = L-glutamate + NH4(+). In Ralstonia nicotianae (strain ATCC BAA-1114 / GMI1000) (Ralstonia solanacearum), this protein is Glutaminase.